A 1805-amino-acid polypeptide reads, in one-letter code: MSDTKVKVAVRVRPMNRRELELNTKCVVEMEGNQTVLHPPPSNTKQGERKPPKVFAFDYCFWSMDESNTTKYAGQEVVFKCLGEGILEKAFQGYNACIFAYGQTGSGKSFSMMGHAEQLGLIPRLCCALFKRISLEQNESQTFKVEVSYMEIYNEKVRDLLDPKGSRQSLKVREHKVLGPYVDGLSQLAVTSFEDIESLMSEGNKSRTVAATNMNEESSRSHAVFNIIITQTLYDLQSGNSGEKVSKVSLVDLAGSERVSKTGAAGERLKEGSNINKSLTTLGLVISSLADQAAGKGKSKFVPYRDSVLTWLLKDNLGGNSQTSMIATISPAADNYEETLSTLRYADRAKRIVNHAVVNEDPNAKVIRELREEVEKLREQLSQAEAMKAPELKEKLEESEKLIKELTVTWEEKLRKTEEIAQERQRQLESMGISLEMSGIKVGDDKCYLVNLNADPALNELLVYYLKDHTRVGADTSQDIQLFGIGIQPQHCEIDIASDGDVTLTPKENARSCVNGTLVCSTTQLWHGDRILWGNNHFFRINLPKRKRRDWLKDFEKETGPPEHDLDAASEASSEPDYNYEFAQMEVIMKTLNSNDPVQNVVQVLEKQYLEEKRSALEEQRLMYERELEQLRQQLSPDRQPQSSGPDRLAYSSQTAQQKVTQWAEERDELFRQSLAKLREQLVKANTLVREANFLAEEMSKLTDYQVTLQIPAANLSANRKRGAIVSEPAIQVRRKGKSTQVWTIEKLENKLIDMRDLYQEWKEKVPEAKRLYGKRGDPFYEAQENHNLIGVANVFLECLFCDVKLQYAVPIISQQGEVAGRLHVEVMRVTGAVPERVVEDDSSENSSESGSLEVVDSSGEIIHRVKKLTCRVKIKEATGLPLNLSNFVFCQYTFWDQCESTVAAPVVDPEVPSPQSKDAQYTVTFSHCKDYVVNVTEEFLEFISDGALAIEVWGHRCAGNGSSIWEVDSLHAKTRTLHDRWNEVTRRIEMWISILELNELGEYAAVELHQAKDVNTGGIFQLRQGHSRRVQVTVKPVQHSGTLPLMVEAILSVSIGCVTARSTKLQRGLDSYQRDDEDGDDMDSYQEEDLNCVRERWSDALIKRREYLDEQIKKVSNKTEKTEDDVEREAQLVEQWVGLTEERNAVLVPAPGSGIPGAPADWIPPPGMETHIPVLFLDLNADDLSANEQLVGPHASGVNSILPKEHGSQFFYLPIIKHSDDEVSATASWDSSVHDSVHLNRVTPQNERIYLIVKTTVQLSHPAAMELVLRKRIAANIYNKQSFTQSLKRRISLKNIFYSCGVTYEIVSNIPKATEEIEDRETLALLAARSENEGTSDGETYIEKYTRGVLQVENILSLERLRQAVTVKEALSTKARHIRRSLSTPNVHNVSSSRPDLSGFDEDDKGWPENQLDMSDYSSSYQDVACYGTLPRDSPRRNKEGCTSETPHALTVSPFKAFSPQPPKFFKPLMPVKEEHKKRIALEARPLLSQESMPPPQAHNPGCIVPSGSNGSSMPVEHNSKREKKIDSEEEENELEAINRKLISSQPYVPVEFADFSVYNASLENREWFSSKVDLSNSRVLEKEVSRSPTTSSITSGYFSHSASNATLSDMVVPSSDSSDQLAIQTKDADSTEHSTPSLVHDFRPSSNKELTEVEKGLVKDKIIVVPLKENSALAKGSPSSQSIPEKNSKSLCRTGSCSELDACPSKISQPARGFCPREVTVEHTTNILEDHSFTEFMGVSEGKDFDGLTDSSAGELSSRRSLPNKTGGKTVSDGLHHPSQLHSKLENDQVIIPEAAFWVLCCQ.

Residues 5-352 (KVKVAVRVRP…LRYADRAKRI (348 aa)) enclose the Kinesin motor domain. An ATP-binding site is contributed by 102–109 (GQTGSGKS). Residues 359 to 436 (NEDPNAKVIR…QLESMGISLE (78 aa)) adopt a coiled-coil conformation. One can recognise an FHA domain in the interval 469 to 519 (HTRVGADTSQDIQLFGIGIQPQHCEIDIASDGDVTLTPKENARSCVNGTLV). Residues 556–567 (EKETGPPEHDLD) are compositionally biased toward basic and acidic residues. 2 disordered regions span residues 556 to 575 (EKET…ASSE) and 633 to 656 (QQLS…SQTA). Coiled coils occupy residues 602–775 (VQVL…LYGK) and 1100–1138 (DALI…EQWV). Serine 636 bears the Phosphoserine mark. Serine 1287 is subject to Phosphoserine. Residues 1385-1396 (TPNVHNVSSSRP) are compositionally biased toward polar residues. Residues 1385 to 1404 (TPNVHNVSSSRPDLSGFDED) are disordered. Phosphoserine is present on residues serine 1454, isoleucine 1481, serine 1490, and methionine 1494. A disordered region spans residues 1507–1531 (PSGSNGSSMPVEHNSKREKKIDSEE). A coiled-coil region spans residues 1518–1547 (EHNSKREKKIDSEEEENELEAINRKLISSQ). The segment covering 1519–1528 (HNSKREKKID) has biased composition (basic and acidic residues). Residues serine 1529 and serine 1572 each carry the phosphoserine modification. Positions 1612-1621 (MVVPSSDSSD) are enriched in low complexity. Residues 1612 to 1645 (MVVPSSDSSDQLAIQTKDADSTEHSTPSLVHDFR) are disordered. Residues serine 1648 and serine 1698 each carry the phosphoserine modification. Residues 1749 to 1779 (GLTDSSAGELSSRRSLPNKTGGKTVSDGLHH) are disordered. The segment covering 1751-1771 (TDSSAGELSSRRSLPNKTGGK) has biased composition (polar residues).

The protein belongs to the TRAFAC class myosin-kinesin ATPase superfamily. Kinesin family. As to quaternary structure, interacts with AP2B1. Interacts with ZFYVE26. Interacts with AP1G1 and AP1G2. Widely expressed, with highest levels in heart, brain and skeletal muscle.

The protein resides in the cytoplasm. It localises to the cytoskeleton. The protein localises to the microtubule organizing center. It is found in the centrosome. Its subcellular location is the midbody. The protein resides in the endosome membrane. It localises to the golgi apparatus membrane. Functionally, plus end-directed microtubule-dependent motor protein involved in intracellular transport and regulating various processes such as mannose-6-phosphate receptor (M6PR) transport to the plasma membrane, endosomal sorting during melanosome biogenesis and cytokinesis. Mediates the transport of M6PR-containing vesicles from trans-Golgi network to the plasma membrane via direct interaction with the AP-1 complex. During melanosome maturation, required for delivering melanogenic enzymes from recycling endosomes to nascent melanosomes by creating peripheral recycling endosomal subdomains in melanocytes. Also required for the abscission step in cytokinesis: mediates translocation of ZFYVE26, and possibly TTC19, to the midbody during cytokinesis. This chain is Kinesin-like protein KIF13A (KIF13A), found in Homo sapiens (Human).